We begin with the raw amino-acid sequence, 357 residues long: MTKPSILVMAGGTGGHIFPGLAVAEYLRICGWNVSWLGNQSGMEYRLVKSCNFPFEAVEFGGLRGKGIKAKLMLPINLARACHQSWKIMRRLKPNVVLGMGGYITFPGGLISKLLKRPLVLHEANSVAGSANRALAKIAMRTLTGFPNTMENAEWVGNPIRQEFDDIAAPAERYEQRQGPLSLLVVGGSLGAAALNENIPAALALIPLEQRPTVIHQAGDKHLLDLQKRYADLGVLADIRPFIEDMPTAYAQADLVICRSGAMTVSELAACGVASCLIPFPHAIDDHQTANAQFLSDADAAVFLPQKNLNPQDLALMIQNLTRTDLKEMAVRAHALSKPHATQRVAEVCADCAGVGI.

Residues 13–15, asparagine 125, arginine 161, serine 189, isoleucine 243, and glutamine 288 contribute to the UDP-N-acetyl-alpha-D-glucosamine site; that span reads TGG.

This sequence belongs to the glycosyltransferase 28 family. MurG subfamily.

Its subcellular location is the cell inner membrane. The catalysed reaction is di-trans,octa-cis-undecaprenyl diphospho-N-acetyl-alpha-D-muramoyl-L-alanyl-D-glutamyl-meso-2,6-diaminopimeloyl-D-alanyl-D-alanine + UDP-N-acetyl-alpha-D-glucosamine = di-trans,octa-cis-undecaprenyl diphospho-[N-acetyl-alpha-D-glucosaminyl-(1-&gt;4)]-N-acetyl-alpha-D-muramoyl-L-alanyl-D-glutamyl-meso-2,6-diaminopimeloyl-D-alanyl-D-alanine + UDP + H(+). The protein operates within cell wall biogenesis; peptidoglycan biosynthesis. Functionally, cell wall formation. Catalyzes the transfer of a GlcNAc subunit on undecaprenyl-pyrophosphoryl-MurNAc-pentapeptide (lipid intermediate I) to form undecaprenyl-pyrophosphoryl-MurNAc-(pentapeptide)GlcNAc (lipid intermediate II). This chain is UDP-N-acetylglucosamine--N-acetylmuramyl-(pentapeptide) pyrophosphoryl-undecaprenol N-acetylglucosamine transferase, found in Polynucleobacter asymbioticus (strain DSM 18221 / CIP 109841 / QLW-P1DMWA-1) (Polynucleobacter necessarius subsp. asymbioticus).